The sequence spans 120 residues: uncharacterized protein (120 aa).

Positions 13 to 119 (VIDKDICKGM…YGLWMAANEE (107 aa)) constitute a PRD domain.

This is an uncharacterized protein from Escherichia coli (strain K12).